Consider the following 326-residue polypeptide: Archaeal actin homolog (326 aa).

ATP contacts are provided by residues 10-14 (YGDTK), Ser179, Gln231, 285-288 (GGSN), and Gln311.

Belongs to the thermophilic archaeal actin family.

Polymerizes into bundles of filaments, forming a helix with a filament width of 5.5 nm and an axial repeating unit of 5.5 nm. Polymerization of Ta0583 requires NTP and is optimal with ATP, but GTP, UTP, CTP, and even the deoxy form of NTP can also support the polymerization reaction. Nucleoside diphosphate or AMP-PNP does not support polymerization. The chain is Archaeal actin homolog from Thermoplasma acidophilum (strain ATCC 25905 / DSM 1728 / JCM 9062 / NBRC 15155 / AMRC-C165).